We begin with the raw amino-acid sequence, 706 residues long: Integrator complex subunit 13 (706 aa).

Positions 564–603 (PPEEEERKKRGRKREDKEDKSEKAVKDYEQEKSWQDSERL) are disordered. Residues 567–622 (EEERKKRGRKREDKEDKSEKAVKDYEQEKSWQDSERLKGILERGKEELAEAEIIKD) adopt a coiled-coil conformation. The short motif at 572–582 (KRGRKREDKED) is the Nuclear localization signal (NLS) element. Lys-611 is covalently cross-linked (Glycyl lysine isopeptide (Lys-Gly) (interchain with G-Cter in SUMO2)). A compositionally biased stretch (basic and acidic residues) spans 615–636 (AEAEIIKDSPDSPEPPNKKPLV). The interval 615–650 (AEAEIIKDSPDSPEPPNKKPLVEMDETPQVEKSKGP) is disordered. Residues Ser-623, Ser-626, and Ser-678 each carry the phosphoserine modification. Residues 649–694 (GPVSLLSLWSNRINTANSRKHQEFAGRLNSVNNRAELYQHLKEENG) are cleavage module binding motif (CMBM).

Belongs to the Integrator subunit 13 family. As to quaternary structure, component of the Integrator complex, composed of core subunits INTS1, INTS2, INTS3, INTS4, INTS5, INTS6, INTS7, INTS8, INTS9/RC74, INTS10, INTS11/CPSF3L, INTS12, INTS13, INTS14 and INTS15. The core complex associates with protein phosphatase 2A subunits PPP2CA and PPP2R1A, to form the Integrator-PP2A (INTAC) complex. INTS13 is part of the tail subcomplex, composed of INTS10, INTS13, INTS14 and INTS15. Interacts with transcription factors ZNF609 and ZNF655. Interacts with PAFAH1B1; this interaction may be required for proper recruitment of dynein complexes to the nuclear envelope at prophase. In terms of tissue distribution, widely expressed. Tends to be up-regulated in seminomas compared to normal testis.

It localises to the nucleus. The protein resides in the cytoplasm. Its function is as follows. Component of the integrator complex, a multiprotein complex that terminates RNA polymerase II (Pol II) transcription in the promoter-proximal region of genes. The integrator complex provides a quality checkpoint during transcription elongation by driving premature transcription termination of transcripts that are unfavorably configured for transcriptional elongation: the complex terminates transcription by (1) catalyzing dephosphorylation of the C-terminal domain (CTD) of Pol II subunit POLR2A/RPB1 and SUPT5H/SPT5, (2) degrading the exiting nascent RNA transcript via endonuclease activity and (3) promoting the release of Pol II from bound DNA. The integrator complex is also involved in terminating the synthesis of non-coding Pol II transcripts, such as enhancer RNAs (eRNAs), small nuclear RNAs (snRNAs), telomerase RNAs and long non-coding RNAs (lncRNAs). Within the integrator complex, INTS13 is part of the integrator tail module and acts as a platform for the recruitment of transcription factors at promoters. At prophase, mediates recruitment of cytoplasmic dynein to the nuclear envelope, a step important for proper centrosome-nucleus coupling. At G2/M phase, may be required for proper spindle formation and execution of cytokinesis. This Homo sapiens (Human) protein is Integrator complex subunit 13.